Reading from the N-terminus, the 451-residue chain is BAHD acyltransferase At3g29680 (451 aa).

Active-site proton acceptor residues include His-161 and Asp-393.

Belongs to the plant acyltransferase family.

In Arabidopsis thaliana (Mouse-ear cress), this protein is BAHD acyltransferase At3g29680.